The sequence spans 374 residues: Nuclear hormone receptor family member nhr-57 (374 aa).

Positions R7–A84 form a DNA-binding region, nuclear receptor. NR C4-type zinc fingers lie at residues C10–C30 and C48–C67. Residues Q124–Q374 enclose the NR LBD domain.

Belongs to the nuclear hormone receptor family.

It is found in the nucleus. Functionally, orphan nuclear receptor. The polypeptide is Nuclear hormone receptor family member nhr-57 (nhr-57) (Caenorhabditis elegans).